The following is a 949-amino-acid chain: Copper-transporting ATPase PAA1, chloroplastic (949 aa).

The transit peptide at 1–103 directs the protein to the chloroplast; sequence MESTLSAFST…SSSPSFRSIS (103 aa). Residues 113–126 show a composition bias toward gly residues; sequence YNGGSGGGGGGGSE. Residues 113-142 are disordered; it reads YNGGSGGGGGGGSESGDSKSKLGANASDGV. One can recognise an HMA domain in the interval 148–222; sequence DIIILDVGGM…HLTNCGFQST (75 aa). Cu(+)-binding residues include C159 and C162. A run of 6 helical transmembrane segments spans residues 253 to 274, 287 to 306, 314 to 334, 349 to 369, 502 to 524, and 543 to 560; these read LAVS…FLGV, FHVS…LVLD, GSPN…SVSS, EEPV…QRAK, VAGR…WNLF, and LQLS…ALGL. The 4-aspartylphosphate intermediate role is filled by D598. 807-814 is an ATP binding site; it reads GDGINDAA. Residues D808 and D812 each coordinate Mg(2+). 2 helical membrane passes run 863 to 882 and 895 to 913; these read KQNL…IAAG and SMAG…TNSL. Positions 925 to 949 are disordered; the sequence is DKNVKPEPKEGTKQPHENTRWKQSS.

The protein belongs to the cation transport ATPase (P-type) (TC 3.A.3) family. Type IB subfamily. Expressed in the shoots and roots.

The protein resides in the plastid. It localises to the chloroplast membrane. The catalysed reaction is Cu(+)(in) + ATP + H2O = Cu(+)(out) + ADP + phosphate + H(+). Its function is as follows. Mediates copper transfer across the plastid envelope. Required for the delivery of copper into the plastid stroma, which is essential for the function of copper proteins. Seems to be selective for monovalent copper Cu(+) transport. Also plays a role in glucose signaling-mediated cell proliferation of root meristem in non-green tissues. The chain is Copper-transporting ATPase PAA1, chloroplastic (PAA1) from Arabidopsis thaliana (Mouse-ear cress).